A 396-amino-acid chain; its full sequence is Tryptophan synthase beta chain (396 aa).

Position 88 is an N6-(pyridoxal phosphate)lysine (Lys-88).

This sequence belongs to the TrpB family. Tetramer of two alpha and two beta chains. Pyridoxal 5'-phosphate is required as a cofactor.

The catalysed reaction is (1S,2R)-1-C-(indol-3-yl)glycerol 3-phosphate + L-serine = D-glyceraldehyde 3-phosphate + L-tryptophan + H2O. The protein operates within amino-acid biosynthesis; L-tryptophan biosynthesis; L-tryptophan from chorismate: step 5/5. Its function is as follows. The beta subunit is responsible for the synthesis of L-tryptophan from indole and L-serine. This Shewanella baltica (strain OS155 / ATCC BAA-1091) protein is Tryptophan synthase beta chain.